A 951-amino-acid chain; its full sequence is Leucine-rich repeat-containing G-protein coupled receptor 4 (951 aa).

Residues 1-24 (MPGPLRLLCFFALGLLGSAGPSGA) form the signal peptide. Positions 25 to 57 (APPLCAAPCSCDGDRRVDCSGKGLTAVPEGLSA) constitute an LRRNT domain. Residues 25 to 544 (APPLCAAPCS…LLGSWMIRLT (520 aa)) are Extracellular-facing. 2 disulfides stabilise this stretch: Cys29–Cys35 and Cys33–Cys43. LRR repeat units follow at residues 58–79 (FTQALDISMNNITQLPEDAFKS), 82–103 (FLEELQLAGNDLSFIHPKALSG), 106–127 (ELKVLTLQNNQLRTVPSEAIHG), 130–151 (ALQSLRLDANHITSVPEDSFEG), 154–177 (QLRHLWLDDNSLTEVPVRPLSNLP), 178–199 (TLQALTLALNNISSIPDFAFTN), 202–223 (SLVVLHLHNNKIKSLSQHCFDG), 226–247 (NLETLDLNYNNLDEFPQAIKAL), 249–270 (SLKELGFHSNSISVIPDGAFGG), and 273–294 (LLRTIHLYDNPLSFVGNSAFHN). An N-linked (GlcNAc...) asparagine glycan is attached at Asn68. Asn188 and Asn199 each carry an N-linked (GlcNAc...) asparagine glycan. 2 N-linked (GlcNAc...) asparagine glycosylation sites follow: Asn294 and Asn314. LRR repeat units follow at residues 320-341 (HLESLTLTGTKISSIPDDLCQN), 344-365 (MLRTLDLSYNNIRDLPSFNGCR), 366-387 (ALEEISLQRNQISLIKENTFQG), 390-411 (SLRILDLSRNLIREIHSGAFAK), and 414-435 (TITNLDVSFNELTSFPTEGLNG). Cys339 and Cys364 form a disulfide bridge. 2 cysteine pairs are disulfide-bonded: Cys470–Cys522 and Cys471–Cys476. An N-linked (GlcNAc...) asparagine glycan is attached at Asn505. Residues 545–565 (VWFIFLVALLFNLLVILTVFA) traverse the membrane as a helical segment. The Cytoplasmic portion of the chain corresponds to 566 to 575 (SCSSLPASKL). Residues 576-596 (FIGLISVSNLLMGIYTGILTF) form a helical membrane-spanning segment. Topologically, residues 597–619 (LDAVSWGRFAEFGIWWETGSGCK) are extracellular. Cys618 and Cys693 are oxidised to a cystine. Residues 620-640 (VAGSLAVFSSESAVFLLTLAA) traverse the membrane as a helical segment. Topologically, residues 641–661 (VERSVFAKDLMKHGKSSHLRQ) are cytoplasmic. The chain crosses the membrane as a helical span at residues 662 to 682 (FQVAALLALLGAAVAGCFPLF). At 683 to 703 (HGGQYSASPLCLPFPTGETPS) the chain is on the extracellular side. The helical transmembrane segment at 704–724 (LGFTVTLVLLNSLAFLLMAII) threads the bilayer. Topologically, residues 725–756 (YTKLYCNLEKEDLSENSQSSVIKHVAWLIFTN) are cytoplasmic. Residues 757-777 (CIFFCPVAFFSFAPLITAISI) form a helical membrane-spanning segment. The Extracellular segment spans residues 778 to 783 (SPEIMK). A helical transmembrane segment spans residues 784-804 (SVTLIFFPLPACLNPVLYVFF). Over 805 to 951 (NPKFKEDWKL…YAYNLQRVRD (147 aa)) the chain is Cytoplasmic. At Ser920 the chain carries Phosphoserine.

It belongs to the G-protein coupled receptor 1 family.

It localises to the cell membrane. Functionally, receptor for R-spondins that potentiates the canonical Wnt signaling pathway and is involved in the formation of various organs. Upon binding to R-spondins (RSPO1, RSPO2, RSPO3 or RSPO4), associates with phosphorylated LRP6 and frizzled receptors that are activated by extracellular Wnt receptors, triggering the canonical Wnt signaling pathway to increase expression of target genes. In contrast to classical G-protein coupled receptors, does not activate heterotrimeric G-proteins to transduce the signal. Its function as activator of the Wnt signaling pathway is required for the development of various organs, including liver, kidney, intestine, bone, reproductive tract and eye. May also act as a receptor for norrin (NDP), such results however require additional confirmation in vivo. Required during spermatogenesis to activate the Wnt signaling pathway in peritubular myoid cells. Required for the maintenance of intestinal stem cells and Paneth cell differentiation in postnatal intestinal crypts. Acts as a regulator of bone formation and remodeling. Involved in kidney development; required for maintaining the ureteric bud in an undifferentiated state. Involved in the development of the anterior segment of the eye. Required during erythropoiesis. Also acts as a negative regulator of innate immunity by inhibiting TLR2/TLR4 associated pattern-recognition and pro-inflammatory cytokine production. Plays an important role in regulating the circadian rhythms of plasma lipids, partially through regulating the rhythmic expression of MTTP. Required for proper development of GnRH neurons (gonadotropin-releasing hormone expressing neurons) that control the release of reproductive hormones from the pituitary gland. In Rattus norvegicus (Rat), this protein is Leucine-rich repeat-containing G-protein coupled receptor 4 (Lgr4).